A 158-amino-acid chain; its full sequence is S-ribosylhomocysteine lyase (158 aa).

3 residues coordinate Fe cation: His56, His60, and Cys125.

The protein belongs to the LuxS family. As to quaternary structure, homodimer. Fe cation serves as cofactor.

The enzyme catalyses S-(5-deoxy-D-ribos-5-yl)-L-homocysteine = (S)-4,5-dihydroxypentane-2,3-dione + L-homocysteine. Functionally, involved in the synthesis of autoinducer 2 (AI-2) which is secreted by bacteria and is used to communicate both the cell density and the metabolic potential of the environment. The regulation of gene expression in response to changes in cell density is called quorum sensing. Catalyzes the transformation of S-ribosylhomocysteine (RHC) to homocysteine (HC) and 4,5-dihydroxy-2,3-pentadione (DPD). The polypeptide is S-ribosylhomocysteine lyase (Leuconostoc citreum (strain KM20)).